The sequence spans 93 residues: Small ribosomal subunit protein uS19 (93 aa).

Residues 73–93 (EFSPTRTYRGHDKKDKKIQKK) form a disordered region.

This sequence belongs to the universal ribosomal protein uS19 family.

In terms of biological role, protein S19 forms a complex with S13 that binds strongly to the 16S ribosomal RNA. The polypeptide is Small ribosomal subunit protein uS19 (Phytoplasma mali (strain AT)).